Reading from the N-terminus, the 178-residue chain is Probetacellulin (178 aa).

A signal peptide spans 1-31 (MARAAPGSGASPLPLLPALALGLVILHCVVA). The Extracellular portion of the chain corresponds to 32-118 (DGNSTRSPED…LFYLRGDRGQ (87 aa)). The N-linked (GlcNAc...) asparagine glycan is linked to asparagine 34. Residues 65 to 105 (HFSRCPKQYKHYCIKGRCRFVVAEQTPSCVCDEGYAGARCE) enclose the EGF-like domain. Cystine bridges form between cysteine 69-cysteine 82, cysteine 77-cysteine 93, and cysteine 95-cysteine 104. Positions 112 to 178 (LRGDRGQILV…NDDIQETSIA (67 aa)) are cleaved as a propeptide — removed in mature form. A helical membrane pass occupies residues 119–139 (ILVICLIAVMVIFIILVVSIC). Topologically, residues 140-178 (TCCHPLRKRRKRRKKEEEMETLGKDITPINDDIQETSIA) are cytoplasmic.

As to quaternary structure, monomer. Interacts with EGFR and ERBB4. In terms of tissue distribution, expressed in a wide range of tissues, including the mammary gland.

The protein resides in the secreted. Its subcellular location is the extracellular space. It is found in the cell membrane. Its function is as follows. Growth factor that binds to EGFR, ERBB4 and other EGF receptor family members. Potent mitogen for retinal pigment epithelial cells and vascular smooth muscle cells. This Bos taurus (Bovine) protein is Probetacellulin (BTC).